Here is a 198-residue protein sequence, read N- to C-terminus: MAKVLVLYYSAYGHIETMAYAVAEGAKSAGAEVTVKRVPELVPEDVAKASYYKVDQAAPIATVDELADYDAIIVGAGTRFGTVASQMRNFWDQTGGLWFAGKLVGKLGSVFTSSATQHGGQESTILGFIPTFLHQGMVVAGLPYAFQGQMGTEEVKGGSPYGASTITNGDGSRQPSEIELEGAKYQGAHVAKLAAKLA.

Residues 4-190 (VLVLYYSAYG…EGAKYQGAHV (187 aa)) form the Flavodoxin-like domain. Residues 10–15 (SAYGHI) and 78–80 (TRF) each bind FMN. Residue Y12 participates in NAD(+) binding. Position 98 (W98) interacts with substrate. FMN contacts are provided by residues 113–119 (SSATQHG) and H134.

Belongs to the WrbA family. FMN serves as cofactor.

The catalysed reaction is a quinone + NADH + H(+) = a quinol + NAD(+). It carries out the reaction a quinone + NADPH + H(+) = a quinol + NADP(+). This is NAD(P)H dehydrogenase (quinone) from Rhizobium johnstonii (strain DSM 114642 / LMG 32736 / 3841) (Rhizobium leguminosarum bv. viciae).